The following is an 86-amino-acid chain: Exodeoxyribonuclease 7 small subunit (86 aa).

The disordered stretch occupies residues 67–86; sequence RVSPASGGATEAPAPAERDR.

The protein belongs to the XseB family. Heterooligomer composed of large and small subunits.

The protein resides in the cytoplasm. It carries out the reaction Exonucleolytic cleavage in either 5'- to 3'- or 3'- to 5'-direction to yield nucleoside 5'-phosphates.. In terms of biological role, bidirectionally degrades single-stranded DNA into large acid-insoluble oligonucleotides, which are then degraded further into small acid-soluble oligonucleotides. The sequence is that of Exodeoxyribonuclease 7 small subunit from Beutenbergia cavernae (strain ATCC BAA-8 / DSM 12333 / CCUG 43141 / JCM 11478 / NBRC 16432 / NCIMB 13614 / HKI 0122).